We begin with the raw amino-acid sequence, 826 residues long: Ribonucleoside-diphosphate reductase large subunit (826 aa).

Residues threonine 171, 186–187, glycine 217, 387–391, and 594–598 each bind substrate; these read SC, NLCAE, and PTSGC. A disulfide bridge links cysteine 187 with cysteine 403. The active-site Proton acceptor is asparagine 387. The active-site Cysteine radical intermediate is the cysteine 389. The Proton acceptor role is filled by glutamate 391.

This sequence belongs to the ribonucleoside diphosphate reductase large chain family. Heterotetramer composed of a homodimer of the large subunit (R1) and a homodimer of the small subunit (R2). Larger multisubunit protein complex are also active, composed of (R1)n(R2)n.

The enzyme catalyses a 2'-deoxyribonucleoside 5'-diphosphate + [thioredoxin]-disulfide + H2O = a ribonucleoside 5'-diphosphate + [thioredoxin]-dithiol. Functionally, ribonucleoside-diphosphate reductase holoenzyme provides the precursors necessary for viral DNA synthesis. Allows virus growth in non-dividing cells, as well as reactivation from latency in infected hosts. Catalyzes the biosynthesis of deoxyribonucleotides from the corresponding ribonucleotides. The chain is Ribonucleoside-diphosphate reductase large subunit from Epstein-Barr virus (strain GD1) (HHV-4).